A 372-amino-acid chain; its full sequence is Chemerin-like receptor 1 (372 aa).

The Extracellular portion of the chain corresponds to 1–39 (MEYEGYNDSSIYGEEYSDGSDYIVDLEEAGPLEAKVAEV). A glycan (N-linked (GlcNAc...) asparagine) is linked at Asn-7. Residues 40-62 (FLVVIYSLVCFLGILGNGLVIVI) traverse the membrane as a helical segment. Residues 63-73 (ATFKMKKTVNT) lie on the Cytoplasmic side of the membrane. The helical transmembrane segment at 74 to 95 (VWFVNLAVADFLFNIFLPIHIT) threads the bilayer. The Extracellular portion of the chain corresponds to 96–112 (YAAMDYHWVFGKAMCKI). The cysteines at positions 110 and 188 are disulfide-linked. Residues 113-133 (SSFLLSHNMYTSVFLLTVISF) form a helical membrane-spanning segment. At 134–152 (DRCISVLLPVWSQNHRSVR) the chain is on the cytoplasmic side. Residues 153–174 (LAYMTCVVVWVLAFFLSSPSLV) form a helical membrane-spanning segment. The Extracellular segment spans residues 175 to 223 (FRDTVSTSHGKITCFNNFSLAAPEPFSHSTHPRTDPVGYSRHVAVTVTR). Asn-191 is a glycosylation site (N-linked (GlcNAc...) asparagine). A helical transmembrane segment spans residues 224-244 (FLCGFLIPVFIITACYLTIVF). At 245–260 (KLQRNRLAKTKKPFKI) the chain is on the cytoplasmic side. A helical membrane pass occupies residues 261 to 281 (IITIIITFFLCWCPYHTLYLL). Over 282 to 299 (ELHHTAVPASVFSLGLPL) the chain is Extracellular. Residues 300-319 (ATAVAIANSCMNPILYVFMG) form a helical membrane-spanning segment. Residues 320 to 372 (HDFKKFKVALFSRLVNALSEDTGPSSYPSHRSFTKMSSLIEKASVNEKETSTL) are Cytoplasmic-facing. Ser-338 bears the Phosphoserine mark. At Thr-341 the chain carries Phosphothreonine. Phosphoserine occurs at positions 348, 351, and 357. The residue at position 371 (Thr-371) is a Phosphothreonine.

It belongs to the chemokine-like receptor (CMKLR) family. As to expression, high expression in heart and lung, low in small intestines, colon, kidney, liver, uterus and brain.

It localises to the cell membrane. In terms of biological role, receptor for the chemoattractant adipokine chemerin/RARRES2 and for the omega-3 fatty acid derived molecule resolvin E1. Interaction with RARRES2 initiates activation of G proteins G(i)/G(o) and beta-arrestin pathways inducing cellular responses via second messenger pathways such as intracellular calcium mobilization, phosphorylation of MAP kinases MAPK1/MAPK3 (ERK1/2), TYRO3, MAPK14/P38MAPK and PI3K leading to multifunctional effects, like, reduction of immune responses, enhancing of adipogenesis and angionesis. Resolvin E1 down-regulates cytokine production in macrophages by reducing the activation of MAPK1/3 (ERK1/2) and NF-kappa-B. Positively regulates adipogenesis and adipocyte metabolism. The chain is Chemerin-like receptor 1 (Cmklr1) from Rattus norvegicus (Rat).